A 309-amino-acid chain; its full sequence is Olfactory receptor 4A47 (309 aa).

The Extracellular segment spans residues 1 to 23 (MEPRKNVTDFVLLGFTQNPKEQK). Asn6 carries N-linked (GlcNAc...) asparagine glycosylation. A helical transmembrane segment spans residues 24 to 47 (VLFVMFLLFYILTMVGNLLIVVTV). At 48–55 (TVSETLGS) the chain is on the cytoplasmic side. The chain crosses the membrane as a helical span at residues 56 to 77 (PMYFFLAGLSFIDIIYSSSISP). The Extracellular portion of the chain corresponds to 78 to 98 (RLISGLFFGNNSISFQSCMAQ). N-linked (GlcNAc...) asparagine glycosylation occurs at Asn87. A disulfide bridge links Cys95 with Cys187. A helical transmembrane segment spans residues 99 to 118 (LFIEHIFGGSEVFLLLVMAY). The Cytoplasmic segment spans residues 119–137 (DCYVAICKPLHYLVIMRQW). A helical transmembrane segment spans residues 138–156 (VCVVLLVVSWVGGFLHSVF). Residues 157–193 (QLSIIYGLPFCGPNVIDHFFCDMYPLLKLVCTDTHAI) lie on the Extracellular side of the membrane. Residues 194-217 (GLLVVANGGLACTIVFLLLLISYG) traverse the membrane as a helical segment. Residues 218 to 233 (VILHSLKNLSQKGRQK) are Cytoplasmic-facing. A helical membrane pass occupies residues 234–256 (ALSTCSSHMTVVVFFFVPCIFMY). Topologically, residues 257 to 267 (ARPARTFPIDK) are extracellular. Residues 268–287 (SVSVFYTVITPMLNPLIYTL) traverse the membrane as a helical segment. Residues 288–309 (RNSEMTSAMKKLWRRDLISSST) lie on the Cytoplasmic side of the membrane.

It belongs to the G-protein coupled receptor 1 family.

The protein resides in the cell membrane. Functionally, odorant receptor. The sequence is that of Olfactory receptor 4A47 (OR4A47) from Homo sapiens (Human).